The chain runs to 151 residues: Transcriptional repressor NrdR (151 aa).

Residues 3 to 34 (CPFCGYSESKVVDSRSTEDNMAIRRRRECLEC) fold into a zinc finger. The ATP-cone domain occupies 49 to 139 (ILVIKKDSSR…VYRQFKDINT (91 aa)).

The protein belongs to the NrdR family. Zn(2+) serves as cofactor.

Functionally, negatively regulates transcription of bacterial ribonucleotide reductase nrd genes and operons by binding to NrdR-boxes. The chain is Transcriptional repressor NrdR from Clostridium acetobutylicum (strain ATCC 824 / DSM 792 / JCM 1419 / IAM 19013 / LMG 5710 / NBRC 13948 / NRRL B-527 / VKM B-1787 / 2291 / W).